Consider the following 95-residue polypeptide: Aspartyl/glutamyl-tRNA(Asn/Gln) amidotransferase subunit C (95 aa).

Belongs to the GatC family. In terms of assembly, heterotrimer of A, B and C subunits.

It carries out the reaction L-glutamyl-tRNA(Gln) + L-glutamine + ATP + H2O = L-glutaminyl-tRNA(Gln) + L-glutamate + ADP + phosphate + H(+). The enzyme catalyses L-aspartyl-tRNA(Asn) + L-glutamine + ATP + H2O = L-asparaginyl-tRNA(Asn) + L-glutamate + ADP + phosphate + 2 H(+). Functionally, allows the formation of correctly charged Asn-tRNA(Asn) or Gln-tRNA(Gln) through the transamidation of misacylated Asp-tRNA(Asn) or Glu-tRNA(Gln) in organisms which lack either or both of asparaginyl-tRNA or glutaminyl-tRNA synthetases. The reaction takes place in the presence of glutamine and ATP through an activated phospho-Asp-tRNA(Asn) or phospho-Glu-tRNA(Gln). The sequence is that of Aspartyl/glutamyl-tRNA(Asn/Gln) amidotransferase subunit C from Hyphomonas neptunium (strain ATCC 15444).